A 260-amino-acid polypeptide reads, in one-letter code: Adenosylcobinamide-GDP ribazoletransferase (260 aa).

A run of 6 helical transmembrane segments spans residues 40–60, 64–84, 117–137, 142–162, 188–208, and 209–229; these read AFPF…LLLL, ADPL…TGAL, YGAI…AVIA, PLTA…AIAW, QFAL…AFGL, and RPLV…TAFI.

Belongs to the CobS family. Requires Mg(2+) as cofactor.

The protein resides in the cell inner membrane. The catalysed reaction is alpha-ribazole + adenosylcob(III)inamide-GDP = adenosylcob(III)alamin + GMP + H(+). It catalyses the reaction alpha-ribazole 5'-phosphate + adenosylcob(III)inamide-GDP = adenosylcob(III)alamin 5'-phosphate + GMP + H(+). The protein operates within cofactor biosynthesis; adenosylcobalamin biosynthesis; adenosylcobalamin from cob(II)yrinate a,c-diamide: step 7/7. In terms of biological role, joins adenosylcobinamide-GDP and alpha-ribazole to generate adenosylcobalamin (Ado-cobalamin). Also synthesizes adenosylcobalamin 5'-phosphate from adenosylcobinamide-GDP and alpha-ribazole 5'-phosphate. This Rhizobium johnstonii (strain DSM 114642 / LMG 32736 / 3841) (Rhizobium leguminosarum bv. viciae) protein is Adenosylcobinamide-GDP ribazoletransferase.